We begin with the raw amino-acid sequence, 555 residues long: Protein NRT1/ PTR FAMILY 2.1 (555 aa).

12 helical membrane passes run 32-52, 68-88, 91-111, 127-147, 175-195, 205-225, 324-344, 369-389, 401-421, 437-457, 476-496, and 517-537; these read TLLGISVTSYGWVLNLIVFLI, IVNGCLSMLPVVTAILADSFF, IPVISASAFISLLGIFLLTLI, ILCQSPSKLHLGVLYAALALV, FFNWYFLTVNTGAIISATAIV, LGFGLCAAANLISFIVFISGK, VLPLWLAILFVGTSIGVQASM, VIVLISSCVFLVLNNWTIYPI, LQQVGIGQVFNILSMAISAIV, VLWLLPPLVIVGIGDAFHYMA, SVTSVAFGISFYLSTALINLI, and WVLVIGGVLNLGYFFVCSWYF.

The protein belongs to the major facilitator superfamily. Proton-dependent oligopeptide transporter (POT/PTR) (TC 2.A.17) family. In terms of tissue distribution, expressed in roots.

It localises to the membrane. Its function is as follows. Transporter involved in a passive nitrate efflux. The chain is Protein NRT1/ PTR FAMILY 2.1 (NPF2.1) from Arabidopsis thaliana (Mouse-ear cress).